We begin with the raw amino-acid sequence, 799 residues long: Conserved oligomeric Golgi complex subunit 6 (799 aa).

The protein belongs to the COG6 family.

The protein localises to the golgi apparatus membrane. Acts as a component of the peripheral membrane COG complex that is involved in intra-Golgi protein trafficking. COG is located at the cis-Golgi, and regulates tethering of retrograde intra-Golgi vesicles and possibly a number of other membrane trafficking events. This chain is Conserved oligomeric Golgi complex subunit 6 (COG6), found in Scheffersomyces stipitis (strain ATCC 58785 / CBS 6054 / NBRC 10063 / NRRL Y-11545) (Yeast).